The primary structure comprises 753 residues: MGNSFLIADTSSLVIGLLLILNGVFISAAKHYGLNKIHIVHLGAKQHDTPELVTKSHYQILEPLLGSKEAAKNSLVYNYKHGFSGFAAKLTASQAKNLSAHPEVLRVVPSRVMRLKTTRTFDYLGLLPTSPKSLLHKTKMGSEAIIGVIDSGIWPESQSFNDTGLGPIPKRWKGKCLSGNGFDAKKHCNKKLIGAEYLTVGLMEMTDGIYDYPSLGESMSPRDHVGHGTHVAAIAAGSFVANANYKGLAGGTARGAAPHARIAMYKVCWREVGCITADLLKAIDHSIRDGVDVISISIGTDAPASFDIDQSDIGFGSFHAVMKGIPVVASAGNEGPNAQTVDNVAPWIITVAATSLDRSFPIPITLGNNLTILGEGLNTFPEVGFTNLILSDEMLSRSIEQGKTQGTIVLAFTANDEMIRKANSITNAGCAGIIYAQSVIDPTVCSSVDVPCAVVDYEYGTDILYYMQTTVVPKAKLSPSKTLIGRPIASRVPRFSCRGPNSVSPAILKPDIAAPGVNVLSAVSGVYKFMSGTSMATPAVSGIVGLLRQTHPHWSPAAIRSALVTTAWKTDPSGEPIFSEGSTRKLADPFDYGGGLINPEKVTHPGLIYDMGIDDYLHYLCSAEYDDDSISKLLGKTYNCTSPKPSMLDFNLPSITIPSLTGEVTVTRTVRNVGPARSVYRPVIESPLGIELDVKPKTLVFGSNITKITFSVRVKSSHRVNTDFYFGSLCWTDGVHNVTIPVSVRTKFMRNYV.

The signal sequence occupies residues 1-29 (MGNSFLIADTSSLVIGLLLILNGVFISAA). A propeptide spans 30–116 (KHYGLNKIHI…VVPSRVMRLK (87 aa)) (activation peptide). In terms of domain architecture, Inhibitor I9 spans 38–115 (HIVHLGAKQH…RVVPSRVMRL (78 aa)). Asn97 carries N-linked (GlcNAc...) asparagine glycosylation. Residues 120–603 (TFDYLGLLPT…GGLINPEKVT (484 aa)) enclose the Peptidase S8 domain. The active-site Charge relay system is Asp150. N-linked (GlcNAc...) asparagine glycosylation is present at Asn161. The Charge relay system role is filled by His227. An N-linked (GlcNAc...) asparagine glycan is attached at Asn369. Catalysis depends on Ser534, which acts as the Charge relay system. N-linked (GlcNAc...) asparagine glycans are attached at residues Asn639, Asn704, and Asn737.

Belongs to the peptidase S8 family.

It localises to the secreted. In Arabidopsis thaliana (Mouse-ear cress), this protein is Subtilisin-like protease SBT3.17.